Reading from the N-terminus, the 1039-residue chain is Multidrug resistance protein MdtB (1039 aa).

The next 12 membrane-spanning stretches (helical) occupy residues 16–36, 342–362, 373–393, 396–416, 440–460, 472–492, 537–557, 863–883, 888–908, 911–931, 968–988, and 1002–1022; these read FILR…AGII, DVQF…YVFL, VAVP…GFSI, LTLM…IVVI, IGFT…PLLF, FAVT…TLTP, WLTL…YLLI, LGGT…VLGV, FIHP…ALLA, MAGS…IGIV, ILMT…STGV, and GGLV…YLLF.

It belongs to the resistance-nodulation-cell division (RND) (TC 2.A.6) family. MdtB subfamily. Part of a tripartite efflux system composed of MdtA, MdtB and MdtC. MdtB forms a heteromultimer with MdtC.

It is found in the cell inner membrane. The protein is Multidrug resistance protein MdtB of Serratia proteamaculans (strain 568).